Consider the following 326-residue polypeptide: MAQRVQLTATVSENQLGQRLDQALAEMFPDYSRSRIKEWILDQRVLVNGKVCDKPKEKVLGGEQVAINAEIEEEARFEPQDIPLDIVYEDEDIIVINKPRDLVVHPGAGNPDGTVLNALLHYYPPIADVPRAGIVHRLDKDTTGLMVVAKTVPAQTRLVESLQRREITREYEAVAIGHMTAGGTVDEPISRHPTKRTHMAVHPMGKPAVTHYRIMEHFRVHTRLRLRLETGRTHQIRVHMAHITHPLVGDPVYGGRPRPPKGASEAFISTLRKFDRQALHATMLRLYHPISGIEMEWHAPIPQDMVELIEVMRADFEEHKDEVDWL.

The region spanning 18–91 is the S4 RNA-binding domain; it reads QRLDQALAEM…IPLDIVYEDE (74 aa). Residue Asp-139 is part of the active site.

The protein belongs to the pseudouridine synthase RluA family.

The protein resides in the cytoplasm. The enzyme catalyses uridine(1911/1915/1917) in 23S rRNA = pseudouridine(1911/1915/1917) in 23S rRNA. In terms of biological role, responsible for synthesis of pseudouridine from uracil at positions 1911, 1915 and 1917 in 23S ribosomal RNA. In Shigella flexneri, this protein is Ribosomal large subunit pseudouridine synthase D (rluD).